Reading from the N-terminus, the 428-residue chain is Glutamate-1-semialdehyde 2,1-aminomutase (428 aa).

K267 is subject to N6-(pyridoxal phosphate)lysine.

The protein belongs to the class-III pyridoxal-phosphate-dependent aminotransferase family. HemL subfamily. As to quaternary structure, homodimer. Requires pyridoxal 5'-phosphate as cofactor.

The protein localises to the cytoplasm. The catalysed reaction is (S)-4-amino-5-oxopentanoate = 5-aminolevulinate. It participates in porphyrin-containing compound metabolism; protoporphyrin-IX biosynthesis; 5-aminolevulinate from L-glutamyl-tRNA(Glu): step 2/2. The chain is Glutamate-1-semialdehyde 2,1-aminomutase from Flavobacterium johnsoniae (strain ATCC 17061 / DSM 2064 / JCM 8514 / BCRC 14874 / CCUG 350202 / NBRC 14942 / NCIMB 11054 / UW101) (Cytophaga johnsonae).